The sequence spans 750 residues: 1,4-alpha-glucan branching enzyme GlgB (750 aa).

The Nucleophile role is filled by Asp425. The active-site Proton donor is the Glu478.

The protein belongs to the glycosyl hydrolase 13 family. GlgB subfamily. Monomer.

The enzyme catalyses Transfers a segment of a (1-&gt;4)-alpha-D-glucan chain to a primary hydroxy group in a similar glucan chain.. Its pathway is glycan biosynthesis; glycogen biosynthesis. In terms of biological role, catalyzes the formation of the alpha-1,6-glucosidic linkages in glycogen by scission of a 1,4-alpha-linked oligosaccharide from growing alpha-1,4-glucan chains and the subsequent attachment of the oligosaccharide to the alpha-1,6 position. The polypeptide is 1,4-alpha-glucan branching enzyme GlgB (Cupriavidus pinatubonensis (strain JMP 134 / LMG 1197) (Cupriavidus necator (strain JMP 134))).